Consider the following 415-residue polypeptide: MDTKAFKRSLHKSEQYHRKGFGHEEEVTNLLQSEYNSKLIQQIRNNGYRLQQGDVTIHLAEAFGFCWGVERAIALAYETRRQFPQERIWITNEIIHNPSVNKNLRDMKVEFIPVQPDGQKDFTVVGQNDVVILPAFGASVQEMQLLHDKGCTIMDTTCPWVSKVWTSVEKHKKGSYTSIIHGKYKHEETIATSSFAGTYLVLLNLEEAEYVADYILNPGDTPSEREQRRADFMAKFANAHSPGFDPETDLERVGIANQTTMLKGETEQIGKLFERTVMRKYGPAQVNEHFLSFNTICDATQERQDAIFQLVDEPLDLMVVIGGFNSSNTTHLQEISIDKNIPSYHIDSVDRIGPGNRVEHKPLNADLTVTDNWLPNGPLAIGVTSGASTPDKVVSDIVEKIFSIKSASAEVVGVR.

Cysteine 66 is a binding site for [4Fe-4S] cluster. Histidine 96 is a binding site for (2E)-4-hydroxy-3-methylbut-2-enyl diphosphate. Histidine 96 lines the dimethylallyl diphosphate pocket. Histidine 96 lines the isopentenyl diphosphate pocket. A [4Fe-4S] cluster-binding site is contributed by cysteine 158. Histidine 186 serves as a coordination point for (2E)-4-hydroxy-3-methylbut-2-enyl diphosphate. Position 186 (histidine 186) interacts with dimethylallyl diphosphate. Histidine 186 is a binding site for isopentenyl diphosphate. Glutamate 188 functions as the Proton donor in the catalytic mechanism. (2E)-4-hydroxy-3-methylbut-2-enyl diphosphate is bound at residue threonine 259. Cysteine 297 contacts [4Fe-4S] cluster. Residues serine 326, serine 327, asparagine 328, and serine 388 each contribute to the (2E)-4-hydroxy-3-methylbut-2-enyl diphosphate site. Dimethylallyl diphosphate contacts are provided by serine 326, serine 327, asparagine 328, and serine 388. Isopentenyl diphosphate contacts are provided by serine 326, serine 327, asparagine 328, and serine 388.

The protein belongs to the IspH family. The cofactor is [4Fe-4S] cluster.

It carries out the reaction isopentenyl diphosphate + 2 oxidized [2Fe-2S]-[ferredoxin] + H2O = (2E)-4-hydroxy-3-methylbut-2-enyl diphosphate + 2 reduced [2Fe-2S]-[ferredoxin] + 2 H(+). The enzyme catalyses dimethylallyl diphosphate + 2 oxidized [2Fe-2S]-[ferredoxin] + H2O = (2E)-4-hydroxy-3-methylbut-2-enyl diphosphate + 2 reduced [2Fe-2S]-[ferredoxin] + 2 H(+). It functions in the pathway isoprenoid biosynthesis; dimethylallyl diphosphate biosynthesis; dimethylallyl diphosphate from (2E)-4-hydroxy-3-methylbutenyl diphosphate: step 1/1. It participates in isoprenoid biosynthesis; isopentenyl diphosphate biosynthesis via DXP pathway; isopentenyl diphosphate from 1-deoxy-D-xylulose 5-phosphate: step 6/6. Its function is as follows. Catalyzes the conversion of 1-hydroxy-2-methyl-2-(E)-butenyl 4-diphosphate (HMBPP) into a mixture of isopentenyl diphosphate (IPP) and dimethylallyl diphosphate (DMAPP). Acts in the terminal step of the DOXP/MEP pathway for isoprenoid precursor biosynthesis. This Acaryochloris marina (strain MBIC 11017) protein is 4-hydroxy-3-methylbut-2-enyl diphosphate reductase.